Consider the following 523-residue polypeptide: Tryptamine 5-hydroxylase (523 aa).

The helical transmembrane segment at 5 to 25 threads the bilayer; the sequence is MASTMSLALLVLSAAYVLVAL. C453 is a binding site for heme.

This sequence belongs to the cytochrome P450 family. It depends on heme as a cofactor.

Its subcellular location is the endoplasmic reticulum membrane. The catalysed reaction is tryptamine + reduced [NADPH--hemoprotein reductase] + O2 = serotonin + oxidized [NADPH--hemoprotein reductase] + H2O + H(+). Functionally, involved in serotonin biosynthesis. Catalyzes the conversion of tryptamine to serotonin. Accumulation of serotonin may play a role in innate immunity. This Oryza sativa subsp. japonica (Rice) protein is Tryptamine 5-hydroxylase.